A 32-amino-acid polypeptide reads, in one-letter code: Cytochrome b6-f complex subunit 7 (32 aa).

The chain crosses the membrane as a helical span at residues 9 to 27 (AVLSSVLVLVGLAIGFLLL).

Belongs to the PetM family. In terms of assembly, the 4 large subunits of the cytochrome b6-f complex are cytochrome b6, subunit IV (17 kDa polypeptide, PetD), cytochrome f and the Rieske protein, while the 4 small subunits are PetG, PetL, PetM and PetN. The complex functions as a dimer.

Its subcellular location is the plastid. The protein resides in the chloroplast thylakoid membrane. Component of the cytochrome b6-f complex, which mediates electron transfer between photosystem II (PSII) and photosystem I (PSI), cyclic electron flow around PSI, and state transitions. This is Cytochrome b6-f complex subunit 7 from Pyropia yezoensis (Susabi-nori).